A 500-amino-acid chain; its full sequence is Lariat debranching enzyme (500 aa).

Residues 1-25 form a disordered region; it reads MSSKNPVDEQPCCGSHEGSHQDPAP. Residues cysteine 48, histidine 50, aspartate 79, and asparagine 124 each contribute to the a divalent metal cation site. Residues 164-194 are lariat recognition loop; that stretch reads SGIFSQGDFQFSHYERPSFSERDVKSAYHVR. A divalent metal cation contacts are provided by histidine 222, histidine 274, and histidine 276. The segment at 453 to 500 is disordered; that stretch reads DDANAKPNQDDVDFGDEDFVIDRGHTSDEPEAKKSRLDEDKFEAVPSE. The span at 462-471 shows a compositional bias: acidic residues; it reads DDVDFGDEDF. Positions 472–500 are enriched in basic and acidic residues; that stretch reads VIDRGHTSDEPEAKKSRLDEDKFEAVPSE.

It belongs to the lariat debranching enzyme family. Fe(2+) serves as cofactor. Requires Zn(2+) as cofactor. It depends on Mn(2+) as a cofactor.

Its subcellular location is the nucleus. Its activity is regulated as follows. Active in presence of diverse metals including Fe(2+), Zn(2+), Mn(2+). Binds two metal cations in two adjacent alpha and beta metal-binding pockets. Functionally, cleaves the 2'-5' phosphodiester linkage at the branch point of lariat intron pre-mRNAs after splicing and converts them into linear molecules that are subsequently degraded. It thereby facilitates ribonucleotide turnover. The chain is Lariat debranching enzyme from Caenorhabditis elegans.